A 400-amino-acid polypeptide reads, in one-letter code: Argininosuccinate synthase (400 aa).

ATP contacts are provided by residues 10 to 18 (AYSGGVDTS) and A38. Y89 is an L-citrulline binding site. G119 is a binding site for ATP. L-aspartate-binding residues include T121, N125, and D126. N125 provides a ligand contact to L-citrulline. R129, S177, S186, E262, and Y274 together coordinate L-citrulline.

The protein belongs to the argininosuccinate synthase family. Type 1 subfamily. Homotetramer.

It is found in the cytoplasm. The catalysed reaction is L-citrulline + L-aspartate + ATP = 2-(N(omega)-L-arginino)succinate + AMP + diphosphate + H(+). It participates in amino-acid biosynthesis; L-arginine biosynthesis; L-arginine from L-ornithine and carbamoyl phosphate: step 2/3. The chain is Argininosuccinate synthase from Synechococcus elongatus (strain ATCC 33912 / PCC 7942 / FACHB-805) (Anacystis nidulans R2).